The following is a 144-amino-acid chain: Large ribosomal subunit protein uL15 (144 aa).

Positions 1–57 (MFLNTLRPGEGSKHAPKRVGRGIGSGLGKTGGRGHKGLKSRSGGSVKPGFEGGQMPL) are disordered. Residues 21 to 31 (RGIGSGLGKTG) show a composition bias toward gly residues.

This sequence belongs to the universal ribosomal protein uL15 family. As to quaternary structure, part of the 50S ribosomal subunit.

Its function is as follows. Binds to the 23S rRNA. In Marinomonas sp. (strain MWYL1), this protein is Large ribosomal subunit protein uL15.